A 189-amino-acid chain; its full sequence is Protein GrpE (189 aa).

Residues 1-37 (MSDSSKEKKKKFADMVSRQKGDDQQSDNHKQTDDLNE) form a disordered region. Over residues 17-33 (SRQKGDDQQSDNHKQTD) the composition is skewed to basic and acidic residues.

This sequence belongs to the GrpE family. In terms of assembly, homodimer.

The protein resides in the cytoplasm. In terms of biological role, participates actively in the response to hyperosmotic and heat shock by preventing the aggregation of stress-denatured proteins, in association with DnaK and GrpE. It is the nucleotide exchange factor for DnaK and may function as a thermosensor. Unfolded proteins bind initially to DnaJ; upon interaction with the DnaJ-bound protein, DnaK hydrolyzes its bound ATP, resulting in the formation of a stable complex. GrpE releases ADP from DnaK; ATP binding to DnaK triggers the release of the substrate protein, thus completing the reaction cycle. Several rounds of ATP-dependent interactions between DnaJ, DnaK and GrpE are required for fully efficient folding. This is Protein GrpE from Wolbachia sp. subsp. Drosophila simulans (strain wRi).